The following is a 575-amino-acid chain: Homocysteine/cysteine synthase (575 aa).

Residue lysine 376 is modified to N6-(pyridoxal phosphate)lysine.

This sequence belongs to the trans-sulfuration enzymes family. MET7 subfamily. Requires pyridoxal 5'-phosphate as cofactor.

Its subcellular location is the cytoplasm. The catalysed reaction is O-acetyl-L-homoserine + methanethiol = L-methionine + acetate + H(+). It catalyses the reaction O-acetyl-L-homoserine + hydrogen sulfide = L-homocysteine + acetate. The enzyme catalyses O-acetyl-L-serine + hydrogen sulfide = L-cysteine + acetate. It functions in the pathway amino-acid biosynthesis; L-methionine biosynthesis via de novo pathway; L-homocysteine from O-acetyl-L-homoserine. Its function is as follows. Plays a role in inorganic sulfur assimilation during sulfur-limited conditions; catalyzes the conversion of O-acetyl-L-homoserine (OAH) into homocysteine in the methionine biosynthesis pathway. Also catalyzes the conversion of O-acetylserine (OAS) into cysteine, the last step in the cysteine biosynthesis pathway. However, it seems that in S.cerevisiae cysteine biosynthesis occurs exclusively through the cystathionine pathway and not via direct incorporation of sulfur into OAS. It therefore has no metabolic role in cysteine biosynthesis and may only have a regulatory role controlling OAS levels. The chain is Homocysteine/cysteine synthase from Saccharomyces cerevisiae (strain ATCC 204508 / S288c) (Baker's yeast).